Here is a 167-residue protein sequence, read N- to C-terminus: Translationally-controlled tumor protein homolog (167 aa).

Positions 1–167 (MLIFEDVISG…WKHGVKENKI (167 aa)) constitute a TCTP domain.

This sequence belongs to the TCTP family.

The protein resides in the cytoplasm. It localises to the cytoskeleton. Involved in protein synthesis. Involved in microtubule stabilization. This chain is Translationally-controlled tumor protein homolog (TMA19), found in Candida albicans (strain SC5314 / ATCC MYA-2876) (Yeast).